The sequence spans 99 residues: DNA-binding protein Fis (99 aa).

The H-T-H motif DNA-binding region spans 75 to 94 (QTRAANMLGINRGTLRKKLK).

It belongs to the transcriptional regulatory Fis family. As to quaternary structure, homodimer.

Its function is as follows. Activates ribosomal RNA transcription. Plays a direct role in upstream activation of rRNA promoters. This chain is DNA-binding protein Fis, found in Haemophilus influenzae (strain PittEE).